The following is a 717-amino-acid chain: HHIP-like protein 2 (717 aa).

Positions 1–40 (MLGKHTSPHTVPGHRAPWLSPGIFCLGLPFLLGWVGLLQG) are cleaved as a signal peptide. 4 disulfides stabilise this stretch: cysteine 203/cysteine 545, cysteine 207/cysteine 551, cysteine 423/cysteine 441, and cysteine 508/cysteine 607. Residues 642–717 (ARKASNATFT…MRQAAGRSHP (76 aa)) form a disordered region. The span at 646-662 (SNATFTSSSDRVASQKG) shows a compositional bias: polar residues. An N-linked (GlcNAc...) asparagine glycan is attached at asparagine 647. Residues 672–687 (SSKKTFRRPGTKKKSR) are compositionally biased toward basic residues.

It belongs to the HHIP family.

It is found in the secreted. This chain is HHIP-like protein 2 (Hhipl2), found in Mus musculus (Mouse).